The chain runs to 91 residues: Small membrane A-kinase anchor protein (91 aa).

Residue Gly2 is the site of N-myristoyl glycine attachment.

This sequence belongs to the small membrane AKAP family. May be palmitoylated at Cys-3.

Its subcellular location is the cell membrane. Functionally, binds to type I regulatory subunits of protein kinase A and may anchor/target them to the plasma membrane. The polypeptide is Small membrane A-kinase anchor protein (Xenopus tropicalis (Western clawed frog)).